The primary structure comprises 513 residues: 2-isopropylmalate synthase (513 aa).

The Pyruvate carboxyltransferase domain occupies 4 to 266 (IEFFDTSLRD…QSPLKLSETA (263 aa)). Residues aspartate 13, histidine 201, histidine 203, and asparagine 237 each coordinate Mn(2+). Positions 390 to 513 (ILDNVQIDGH…VEQISAHDGI (124 aa)) are regulatory domain.

Belongs to the alpha-IPM synthase/homocitrate synthase family. LeuA type 1 subfamily. Homodimer. It depends on Mn(2+) as a cofactor.

It is found in the cytoplasm. The enzyme catalyses 3-methyl-2-oxobutanoate + acetyl-CoA + H2O = (2S)-2-isopropylmalate + CoA + H(+). Its pathway is amino-acid biosynthesis; L-leucine biosynthesis; L-leucine from 3-methyl-2-oxobutanoate: step 1/4. Functionally, catalyzes the condensation of the acetyl group of acetyl-CoA with 3-methyl-2-oxobutanoate (2-ketoisovalerate) to form 3-carboxy-3-hydroxy-4-methylpentanoate (2-isopropylmalate). This is 2-isopropylmalate synthase from Lactococcus lactis subsp. lactis (strain IL1403) (Streptococcus lactis).